The following is a 354-amino-acid chain: S-adenosylmethionine:tRNA ribosyltransferase-isomerase (354 aa).

The protein belongs to the QueA family. Monomer.

The protein localises to the cytoplasm. The enzyme catalyses 7-aminomethyl-7-carbaguanosine(34) in tRNA + S-adenosyl-L-methionine = epoxyqueuosine(34) in tRNA + adenine + L-methionine + 2 H(+). It participates in tRNA modification; tRNA-queuosine biosynthesis. Transfers and isomerizes the ribose moiety from AdoMet to the 7-aminomethyl group of 7-deazaguanine (preQ1-tRNA) to give epoxyqueuosine (oQ-tRNA). This is S-adenosylmethionine:tRNA ribosyltransferase-isomerase from Methylobacterium radiotolerans (strain ATCC 27329 / DSM 1819 / JCM 2831 / NBRC 15690 / NCIMB 10815 / 0-1).